We begin with the raw amino-acid sequence, 480 residues long: Probable glycine dehydrogenase (decarboxylating) subunit 2 (480 aa).

An N6-(pyridoxal phosphate)lysine modification is found at Lys265.

This sequence belongs to the GcvP family. C-terminal subunit subfamily. The glycine cleavage system is composed of four proteins: P, T, L and H. In this organism, the P 'protein' is a heterodimer of two subunits. Pyridoxal 5'-phosphate is required as a cofactor.

The catalysed reaction is N(6)-[(R)-lipoyl]-L-lysyl-[glycine-cleavage complex H protein] + glycine + H(+) = N(6)-[(R)-S(8)-aminomethyldihydrolipoyl]-L-lysyl-[glycine-cleavage complex H protein] + CO2. The glycine cleavage system catalyzes the degradation of glycine. The P protein binds the alpha-amino group of glycine through its pyridoxal phosphate cofactor; CO(2) is released and the remaining methylamine moiety is then transferred to the lipoamide cofactor of the H protein. The protein is Probable glycine dehydrogenase (decarboxylating) subunit 2 of Thermosipho africanus (strain TCF52B).